We begin with the raw amino-acid sequence, 142 residues long: uncharacterized protein (142 aa).

This sequence belongs to the IIV-6 115R family.

This is an uncharacterized protein from Invertebrate iridescent virus 3 (IIV-3).